Here is a 98-residue protein sequence, read N- to C-terminus: Large ribosomal subunit protein uL23 (98 aa).

It belongs to the universal ribosomal protein uL23 family. Part of the 50S ribosomal subunit. Contacts protein L29, and trigger factor when it is bound to the ribosome.

In terms of biological role, one of the early assembly proteins it binds 23S rRNA. One of the proteins that surrounds the polypeptide exit tunnel on the outside of the ribosome. Forms the main docking site for trigger factor binding to the ribosome. The protein is Large ribosomal subunit protein uL23 of Hydrogenovibrio crunogenus (strain DSM 25203 / XCL-2) (Thiomicrospira crunogena).